A 195-amino-acid chain; its full sequence is Probable GTP-binding protein EngB (195 aa).

An EngB-type G domain is found at 22–194; the sequence is LKGEVAFVGR…LDLISTLLKE (173 aa). Residues 30-37, 56-60, 74-77, 141-144, and 173-175 each bind GTP; these read GRSNVGKS, GKTRS, DLPG, TKMD, and TSS. Positions 37 and 58 each coordinate Mg(2+).

It belongs to the TRAFAC class TrmE-Era-EngA-EngB-Septin-like GTPase superfamily. EngB GTPase family. It depends on Mg(2+) as a cofactor.

Its function is as follows. Necessary for normal cell division and for the maintenance of normal septation. This is Probable GTP-binding protein EngB from Thermotoga maritima (strain ATCC 43589 / DSM 3109 / JCM 10099 / NBRC 100826 / MSB8).